The sequence spans 283 residues: Bis(5'-nucleosyl)-tetraphosphatase, symmetrical (283 aa).

Belongs to the Ap4A hydrolase family.

It catalyses the reaction P(1),P(4)-bis(5'-adenosyl) tetraphosphate + H2O = 2 ADP + 2 H(+). Hydrolyzes diadenosine 5',5'''-P1,P4-tetraphosphate to yield ADP. This chain is Bis(5'-nucleosyl)-tetraphosphatase, symmetrical, found in Serratia proteamaculans (strain 568).